A 275-amino-acid chain; its full sequence is COP9 signalosome complex subunit 7a (275 aa).

N-acetylserine is present on Ser-2. A PCI domain is found at 2 to 159 (SAEVKVTGQN…QRLEVDYSIG (158 aa)). Positions 185–233 (LSGIEEQVSRANQHKEQQLGLKQQIESEVANLKKTIKVTTAAAAAATSQ) form a coiled coil. Residues 227–275 (AAAATSQDPEQHLTELREPAPGTNQRQPSKKASKGKGLRGSAKIWSKSN) form a disordered region. Residues 235 to 244 (PEQHLTELRE) are compositionally biased toward basic and acidic residues. Residues 254-263 (PSKKASKGKG) are compositionally biased toward basic residues.

This sequence belongs to the CSN7/EIF3M family. CSN7 subfamily. Component of the CSN complex, composed of COPS1/GPS1, COPS2, COPS3, COPS4, COPS5, COPS6, COPS7 (COPS7A or COPS7B), COPS8 and COPS9. In the complex, it probably interacts directly with COPS1, COPS2, COPS4, COPS5, COPS6 and COPS8. Interacts with PMF1. Interacts with the translation initiation factor EIF3S6. Interacts with CK2 and PKD. Interacts directly with ID3. Post-translationally, phosphorylated by CK2 and PKD kinases.

Its subcellular location is the cytoplasm. It localises to the nucleus. Component of the COP9 signalosome complex (CSN), a complex involved in various cellular and developmental processes. The CSN complex is an essential regulator of the ubiquitin (Ubl) conjugation pathway by mediating the deneddylation of the cullin subunits of SCF-type E3 ligase complexes, leading to decrease the Ubl ligase activity of SCF-type complexes such as SCF, CSA or DDB2. The complex is also involved in phosphorylation of p53/TP53, JUN, I-kappa-B-alpha/NFKBIA, ITPK1 and IRF8/ICSBP, possibly via its association with CK2 and PKD kinases. CSN-dependent phosphorylation of TP53 and JUN promotes and protects degradation by the Ubl system, respectively. The polypeptide is COP9 signalosome complex subunit 7a (COPS7A) (Pongo abelii (Sumatran orangutan)).